The chain runs to 248 residues: Triosephosphate isomerase (248 aa).

Asn10 and Lys12 together coordinate substrate. The active-site Electrophile is His95. The active-site Proton acceptor is Glu165.

It belongs to the triosephosphate isomerase family. Homodimer.

The enzyme catalyses D-glyceraldehyde 3-phosphate = dihydroxyacetone phosphate. It participates in carbohydrate biosynthesis; gluconeogenesis. Its pathway is carbohydrate degradation; glycolysis; D-glyceraldehyde 3-phosphate from glycerone phosphate: step 1/1. In Debaryomyces hansenii (strain ATCC 36239 / CBS 767 / BCRC 21394 / JCM 1990 / NBRC 0083 / IGC 2968) (Yeast), this protein is Triosephosphate isomerase (TPI1).